Consider the following 144-residue polypeptide: Large ribosomal subunit protein uL15 (144 aa).

The disordered stretch occupies residues Met-1 to Leu-57. Residues Arg-21–Gly-31 are compositionally biased toward gly residues. The segment covering Gly-32 to Gly-44 has biased composition (basic residues).

Belongs to the universal ribosomal protein uL15 family. Part of the 50S ribosomal subunit.

Binds to the 23S rRNA. This chain is Large ribosomal subunit protein uL15, found in Vibrio vulnificus (strain CMCP6).